The chain runs to 464 residues: Glutamate--tRNA ligase (464 aa).

A 'HIGH' region motif is present at residues 9–19; the sequence is PSPTGYLHIGG. The short motif at 242–246 is the 'KMSKS' region element; that stretch reads KISKR. Lys245 serves as a coordination point for ATP.

Belongs to the class-I aminoacyl-tRNA synthetase family. Glutamate--tRNA ligase type 1 subfamily. Monomer.

It is found in the cytoplasm. It catalyses the reaction tRNA(Glu) + L-glutamate + ATP = L-glutamyl-tRNA(Glu) + AMP + diphosphate. Catalyzes the attachment of glutamate to tRNA(Glu) in a two-step reaction: glutamate is first activated by ATP to form Glu-AMP and then transferred to the acceptor end of tRNA(Glu). The protein is Glutamate--tRNA ligase of Neisseria meningitidis serogroup B (strain ATCC BAA-335 / MC58).